The primary structure comprises 275 residues: Putative pyruvate, phosphate dikinase regulatory protein (275 aa).

Position 151–158 (151–158 (GVSRTSKT)) interacts with ADP.

This sequence belongs to the pyruvate, phosphate/water dikinase regulatory protein family. PDRP subfamily.

It carries out the reaction N(tele)-phospho-L-histidyl/L-threonyl-[pyruvate, phosphate dikinase] + ADP = N(tele)-phospho-L-histidyl/O-phospho-L-threonyl-[pyruvate, phosphate dikinase] + AMP + H(+). It catalyses the reaction N(tele)-phospho-L-histidyl/O-phospho-L-threonyl-[pyruvate, phosphate dikinase] + phosphate + H(+) = N(tele)-phospho-L-histidyl/L-threonyl-[pyruvate, phosphate dikinase] + diphosphate. Functionally, bifunctional serine/threonine kinase and phosphorylase involved in the regulation of the pyruvate, phosphate dikinase (PPDK) by catalyzing its phosphorylation/dephosphorylation. This Rhodospirillum rubrum (strain ATCC 11170 / ATH 1.1.1 / DSM 467 / LMG 4362 / NCIMB 8255 / S1) protein is Putative pyruvate, phosphate dikinase regulatory protein.